We begin with the raw amino-acid sequence, 204 residues long: Imidazoleglycerol-phosphate dehydratase (204 aa).

The protein belongs to the imidazoleglycerol-phosphate dehydratase family.

It is found in the cytoplasm. It carries out the reaction D-erythro-1-(imidazol-4-yl)glycerol 3-phosphate = 3-(imidazol-4-yl)-2-oxopropyl phosphate + H2O. It functions in the pathway amino-acid biosynthesis; L-histidine biosynthesis; L-histidine from 5-phospho-alpha-D-ribose 1-diphosphate: step 6/9. This is Imidazoleglycerol-phosphate dehydratase from Rhodococcus erythropolis (strain PR4 / NBRC 100887).